Here is a 570-residue protein sequence, read N- to C-terminus: Formate--tetrahydrofolate ligase (570 aa).

Residue 65–72 (TPHGEGKT) coordinates ATP.

Belongs to the formate--tetrahydrofolate ligase family.

It catalyses the reaction (6S)-5,6,7,8-tetrahydrofolate + formate + ATP = (6R)-10-formyltetrahydrofolate + ADP + phosphate. It participates in one-carbon metabolism; tetrahydrofolate interconversion. This is Formate--tetrahydrofolate ligase from Shewanella putrefaciens (strain CN-32 / ATCC BAA-453).